The chain runs to 314 residues: Porphobilinogen deaminase (314 aa).

Residue cysteine 242 is modified to S-(dipyrrolylmethanemethyl)cysteine.

This sequence belongs to the HMBS family. Monomer. It depends on dipyrromethane as a cofactor.

It catalyses the reaction 4 porphobilinogen + H2O = hydroxymethylbilane + 4 NH4(+). It functions in the pathway porphyrin-containing compound metabolism; protoporphyrin-IX biosynthesis; coproporphyrinogen-III from 5-aminolevulinate: step 2/4. In terms of biological role, tetrapolymerization of the monopyrrole PBG into the hydroxymethylbilane pre-uroporphyrinogen in several discrete steps. This Bacillus subtilis (strain 168) protein is Porphobilinogen deaminase (hemC).